The chain runs to 392 residues: ATP phosphoribosyltransferase regulatory subunit (392 aa).

It belongs to the class-II aminoacyl-tRNA synthetase family. HisZ subfamily. In terms of assembly, heteromultimer composed of HisG and HisZ subunits.

Its subcellular location is the cytoplasm. It participates in amino-acid biosynthesis; L-histidine biosynthesis; L-histidine from 5-phospho-alpha-D-ribose 1-diphosphate: step 1/9. Its function is as follows. Required for the first step of histidine biosynthesis. May allow the feedback regulation of ATP phosphoribosyltransferase activity by histidine. The polypeptide is ATP phosphoribosyltransferase regulatory subunit (Synechococcus sp. (strain CC9902)).